The primary structure comprises 364 residues: Phosphoserine aminotransferase (364 aa).

Arg-41 serves as a coordination point for L-glutamate. Pyridoxal 5'-phosphate contacts are provided by residues 75–76 (AS), Trp-100, Thr-155, Asp-175, and Gln-198. At Lys-199 the chain carries N6-(pyridoxal phosphate)lysine. 239 to 240 (NT) is a pyridoxal 5'-phosphate binding site.

The protein belongs to the class-V pyridoxal-phosphate-dependent aminotransferase family. SerC subfamily. In terms of assembly, homodimer. The cofactor is pyridoxal 5'-phosphate.

It is found in the cytoplasm. The enzyme catalyses O-phospho-L-serine + 2-oxoglutarate = 3-phosphooxypyruvate + L-glutamate. It catalyses the reaction 4-(phosphooxy)-L-threonine + 2-oxoglutarate = (R)-3-hydroxy-2-oxo-4-phosphooxybutanoate + L-glutamate. It functions in the pathway amino-acid biosynthesis; L-serine biosynthesis; L-serine from 3-phospho-D-glycerate: step 2/3. Its function is as follows. Catalyzes the reversible conversion of 3-phosphohydroxypyruvate to phosphoserine and of 3-hydroxy-2-oxo-4-phosphonooxybutanoate to phosphohydroxythreonine. The sequence is that of Phosphoserine aminotransferase from Streptococcus uberis (strain ATCC BAA-854 / 0140J).